The sequence spans 163 residues: Ribosome maturation factor RimP (163 aa).

It belongs to the RimP family.

It is found in the cytoplasm. Its function is as follows. Required for maturation of 30S ribosomal subunits. This is Ribosome maturation factor RimP from Polynucleobacter asymbioticus (strain DSM 18221 / CIP 109841 / QLW-P1DMWA-1) (Polynucleobacter necessarius subsp. asymbioticus).